The sequence spans 200 residues: MSGFQQHTGLVVPLDTANIDTDAIIPKQFLQKVNRIGFGKHLFHDWRFLDDAGQQPNPEFVMNAPRYKGASILLARENFGCGSSREHAPWALADYGIQVMIAPSFADIFYGNSINNQMVPVRLTEQEVDELFQFVEANEGAEITVDLEAMKVRANGKEYSFEIDEFRRHCLLNGLDNIGLTLQHADKISEFEAKIPSFLK.

This sequence belongs to the LeuD family. LeuD type 1 subfamily. Heterodimer of LeuC and LeuD.

The catalysed reaction is (2R,3S)-3-isopropylmalate = (2S)-2-isopropylmalate. The protein operates within amino-acid biosynthesis; L-leucine biosynthesis; L-leucine from 3-methyl-2-oxobutanoate: step 2/4. In terms of biological role, catalyzes the isomerization between 2-isopropylmalate and 3-isopropylmalate, via the formation of 2-isopropylmaleate. This Vibrio atlanticus (strain LGP32) (Vibrio splendidus (strain Mel32)) protein is 3-isopropylmalate dehydratase small subunit.